Here is a 242-residue protein sequence, read N- to C-terminus: Pyridoxine 5'-phosphate synthase (242 aa).

3-amino-2-oxopropyl phosphate is bound at residue Asn6. 8-9 (DH) contacts 1-deoxy-D-xylulose 5-phosphate. Arg17 provides a ligand contact to 3-amino-2-oxopropyl phosphate. The active-site Proton acceptor is His42. Positions 44 and 49 each coordinate 1-deoxy-D-xylulose 5-phosphate. Glu69 serves as the catalytic Proton acceptor. Thr99 contributes to the 1-deoxy-D-xylulose 5-phosphate binding site. The active-site Proton donor is the His190. Residues Gly191 and 212–213 (GH) contribute to the 3-amino-2-oxopropyl phosphate site.

Belongs to the PNP synthase family. In terms of assembly, homooctamer; tetramer of dimers.

It localises to the cytoplasm. It carries out the reaction 3-amino-2-oxopropyl phosphate + 1-deoxy-D-xylulose 5-phosphate = pyridoxine 5'-phosphate + phosphate + 2 H2O + H(+). It functions in the pathway cofactor biosynthesis; pyridoxine 5'-phosphate biosynthesis; pyridoxine 5'-phosphate from D-erythrose 4-phosphate: step 5/5. Functionally, catalyzes the complicated ring closure reaction between the two acyclic compounds 1-deoxy-D-xylulose-5-phosphate (DXP) and 3-amino-2-oxopropyl phosphate (1-amino-acetone-3-phosphate or AAP) to form pyridoxine 5'-phosphate (PNP) and inorganic phosphate. This is Pyridoxine 5'-phosphate synthase from Neisseria meningitidis serogroup A / serotype 4A (strain DSM 15465 / Z2491).